A 359-amino-acid chain; its full sequence is Hyaluronan and proteoglycan link protein 3 (359 aa).

The first 17 residues, 1–17 (MSLLFLVLLSPFPCVLG), serve as a signal peptide directing secretion. The region spanning 48 to 164 (KLVVETTEES…ESGLVELELR (117 aa)) is the Ig-like V-type domain. Intrachain disulfides connect Cys-70-Cys-146, Cys-188-Cys-259, Cys-212-Cys-233, Cys-286-Cys-355, and Cys-311-Cys-332. Link domains are found at residues 166–261 (VVFP…FCFA) and 266–357 (GRVY…YCYV).

It belongs to the HAPLN family.

Its subcellular location is the secreted. The protein resides in the extracellular space. It localises to the extracellular matrix. In terms of biological role, may function in hyaluronic acid binding. This chain is Hyaluronan and proteoglycan link protein 3 (Hapln3), found in Mus musculus (Mouse).